The chain runs to 101 residues: Large ribosomal subunit protein eL43 (101 aa).

Residues 40-62 form a C4-type zinc finger; that stretch reads CPSCRSLVRLQRIAFGIWKCPKC.

The protein belongs to the eukaryotic ribosomal protein eL43 family. Requires Zn(2+) as cofactor.

The protein is Large ribosomal subunit protein eL43 of Pyrobaculum neutrophilum (strain DSM 2338 / JCM 9278 / NBRC 100436 / V24Sta) (Thermoproteus neutrophilus).